The sequence spans 307 residues: N-acetylmuramic acid 6-phosphate etherase 2 (307 aa).

Residues 62–225 form the SIS domain; it reads ITAAFKQGGR…TTASMIRLGK (164 aa). The active-site Proton donor is the glutamate 90. Glutamate 121 is a catalytic residue.

It belongs to the GCKR-like family. MurNAc-6-P etherase subfamily. As to quaternary structure, homodimer.

The enzyme catalyses N-acetyl-D-muramate 6-phosphate + H2O = N-acetyl-D-glucosamine 6-phosphate + (R)-lactate. Its pathway is amino-sugar metabolism; 1,6-anhydro-N-acetylmuramate degradation. It functions in the pathway amino-sugar metabolism; N-acetylmuramate degradation. It participates in cell wall biogenesis; peptidoglycan recycling. Its function is as follows. Specifically catalyzes the cleavage of the D-lactyl ether substituent of MurNAc 6-phosphate, producing GlcNAc 6-phosphate and D-lactate. Together with AnmK, is also required for the utilization of anhydro-N-acetylmuramic acid (anhMurNAc) either imported from the medium or derived from its own cell wall murein, and thus plays a role in cell wall recycling. The chain is N-acetylmuramic acid 6-phosphate etherase 2 from Vibrio cholerae serotype O1 (strain ATCC 39315 / El Tor Inaba N16961).